We begin with the raw amino-acid sequence, 172 residues long: Small ribosomal subunit protein uS5 (172 aa).

The region spanning 17 to 80 (MREKMIAVNR…EEARRKMIKV (64 aa)) is the S5 DRBM domain.

The protein belongs to the universal ribosomal protein uS5 family. As to quaternary structure, part of the 30S ribosomal subunit. Contacts proteins S4 and S8.

Its function is as follows. With S4 and S12 plays an important role in translational accuracy. Functionally, located at the back of the 30S subunit body where it stabilizes the conformation of the head with respect to the body. This chain is Small ribosomal subunit protein uS5, found in Janthinobacterium sp. (strain Marseille) (Minibacterium massiliensis).